A 146-amino-acid chain; its full sequence is MKLHELKPAEGSRKVRNRVGRGIGSGNGKTAGKGHKGQNARSGGGVRPGFEGGQNPLYRRLPKRGFTNPTRKEFAVVNLEKLNRFEDGTEVSPELLLETGVVSNAKDGIKILGNGKLEKKLTVKANKFSASAVEAIEAAGGKTEVI.

The span at 1–13 (MKLHELKPAEGSR) shows a compositional bias: basic and acidic residues. The tract at residues 1 to 65 (MKLHELKPAE…PLYRRLPKRG (65 aa)) is disordered. Composition is skewed to gly residues over residues 21 to 31 (RGIGSGNGKTA) and 42 to 52 (SGGGVRPGFEG).

The protein belongs to the universal ribosomal protein uL15 family. In terms of assembly, part of the 50S ribosomal subunit.

Its function is as follows. Binds to the 23S rRNA. In Halalkalibacterium halodurans (strain ATCC BAA-125 / DSM 18197 / FERM 7344 / JCM 9153 / C-125) (Bacillus halodurans), this protein is Large ribosomal subunit protein uL15.